We begin with the raw amino-acid sequence, 269 residues long: uncharacterized protein (269 aa).

Positions 3 to 105 (WIINDNIEFW…VPRRGFKIHN (103 aa)) form a DNA-binding region, ompR/PhoB-type.

To V.cholerae cholera toxin transcriptional activator (ToxR).

This is an uncharacterized protein from Escherichia coli (strain K12).